Reading from the N-terminus, the 570-residue chain is Nucleoprotein (570 aa).

The tract at residues 54–236 (LRKTKRTDDD…ITKEESSINI (183 aa)) is binding site for the cap structure m7GTP. The disordered stretch occupies residues 332–356 (DLTKKPDAVPEPGAAPRPAERKGQN). The Mg(2+) site is built by Asp386 and Glu388. 2 residues coordinate Mn(2+): Asp386 and Glu388. 4 residues coordinate Zn(2+): Glu396, Cys503, His506, and Cys531. Asp535 is a binding site for Mg(2+). Residue Asp535 participates in Mn(2+) binding.

This sequence belongs to the arenaviridae nucleocapsid protein family. In terms of assembly, homomultimerizes to form the nucleocapsid. Binds to viral genomic RNA. Interacts with glycoprotein G2. Interacts with protein Z; this interaction probably directs the encapsidated genome to budding sites. Interacts with protein L; this interaction does not interfere with Z-L interaction. Interacts with host IKBKE (via Protein kinase domain); the interaction inhibits IKBKE kinase activity.

Its subcellular location is the virion. It is found in the host cytoplasm. Encapsidates the genome, protecting it from nucleases. The encapsidated genomic RNA is termed the nucleocapsid (NC). Serves as template for viral transcription and replication. The increased presence of protein N in host cell does not seem to trigger the switch from transcription to replication as observed in other negative strain RNA viruses. Through the interaction with host IKBKE, strongly inhibits the phosphorylation and nuclear translocation of host IRF3, a protein involved in interferon activation pathway, leading to the inhibition of interferon-beta and IRF3-dependent promoters activation. Also encodes a functional 3'-5' exoribonuclease that degrades preferentially dsRNA substrates and thereby participates in the suppression of interferon induction. This chain is Nucleoprotein, found in Artibeus (neotropical fruit bats).